A 349-amino-acid chain; its full sequence is Biotin synthase (349 aa).

One can recognise a Radical SAM core domain in the interval Gly60–Arg287. Residues Cys75, Cys79, and Cys82 each coordinate [4Fe-4S] cluster. The [2Fe-2S] cluster site is built by Cys119, Cys150, Cys210, and Arg282.

Belongs to the radical SAM superfamily. Biotin synthase family. In terms of assembly, homodimer. Requires [4Fe-4S] cluster as cofactor. The cofactor is [2Fe-2S] cluster.

The catalysed reaction is (4R,5S)-dethiobiotin + (sulfur carrier)-SH + 2 reduced [2Fe-2S]-[ferredoxin] + 2 S-adenosyl-L-methionine = (sulfur carrier)-H + biotin + 2 5'-deoxyadenosine + 2 L-methionine + 2 oxidized [2Fe-2S]-[ferredoxin]. The protein operates within cofactor biosynthesis; biotin biosynthesis; biotin from 7,8-diaminononanoate: step 2/2. Functionally, catalyzes the conversion of dethiobiotin (DTB) to biotin by the insertion of a sulfur atom into dethiobiotin via a radical-based mechanism. The protein is Biotin synthase of Albidiferax ferrireducens (strain ATCC BAA-621 / DSM 15236 / T118) (Rhodoferax ferrireducens).